The following is a 1959-amino-acid chain: Myosin-9 (1959 aa).

The Myosin N-terminal SH3-like domain maps to 27 to 77 (AAKKLVWVPSEKSGFEAASLKEEVGDEAIVELAENGKKVKVNKDDIQKMNP). One can recognise a Myosin motor domain in the interval 81–776 (SKVEDMAELT…VLAHLEEERD (696 aa)). 174–181 (GESGAGKT) lines the ATP pocket. The segment at 654–676 (LAKLMATLRNTNPNFVRCIIPNH) is actin-binding. An IQ domain is found at 779-808 (ITDVIIGFQACCRGYLARKAFAKRQQQLTA). Residues 837–1925 (LLQVSRQEEE…LKSKLRRGDL (1089 aa)) adopt a coiled-coil conformation. 4 disordered regions span residues 1118 to 1168 (EDLE…REQE), 1694 to 1717 (RAKR…SGKG), 1879 to 1917 (LEEA…SSLK), and 1936 to 1959 (KGTG…KATE). 2 stretches are compositionally biased toward basic and acidic residues: residues 1122 to 1148 (SERA…KTEL) and 1694 to 1704 (RAKRQAQQERD). The segment covering 1947–1959 (DGKAEAGDAKATE) has biased composition (basic and acidic residues).

The protein belongs to the TRAFAC class myosin-kinesin ATPase superfamily. Myosin family. Myosin is a hexameric protein that consists of 2 heavy chain subunits (MHC), 2 alkali light chain subunits (MLC) and 2 regulatory light chain subunits (MLC-2). In terms of tissue distribution, expressed in fibroblasts, brain, lung, kidney, spleen, and skeletal, cardiac and smooth muscles.

Its subcellular location is the cytoplasm. It is found in the cytoskeleton. The protein localises to the cell cortex. It localises to the cytoplasmic vesicle. The protein resides in the secretory vesicle. Its subcellular location is the cortical granule. Functionally, cellular myosin that appears to play a role in cytokinesis, cell shape, and specialized functions such as secretion and capping. The sequence is that of Myosin-9 (MYH9) from Gallus gallus (Chicken).